The chain runs to 491 residues: 2,3-bisphosphoglycerate-independent phosphoglycerate mutase (491 aa).

The Mn(2+) site is built by aspartate 11 and serine 61. Serine 61 (phosphoserine intermediate) is an active-site residue. Residues histidine 118, arginine 147–aspartate 148, arginine 177, arginine 183, arginine 248–arginine 251, and lysine 320 each bind substrate. Residues aspartate 386, histidine 390, aspartate 427, histidine 428, and histidine 445 each coordinate Mn(2+).

Belongs to the BPG-independent phosphoglycerate mutase family. As to quaternary structure, monomer. Mn(2+) serves as cofactor.

The enzyme catalyses (2R)-2-phosphoglycerate = (2R)-3-phosphoglycerate. The protein operates within carbohydrate degradation; glycolysis; pyruvate from D-glyceraldehyde 3-phosphate: step 3/5. Its function is as follows. Catalyzes the interconversion of 2-phosphoglycerate and 3-phosphoglycerate. The chain is 2,3-bisphosphoglycerate-independent phosphoglycerate mutase from Aliarcobacter butzleri (strain RM4018) (Arcobacter butzleri).